Here is a 369-residue protein sequence, read N- to C-terminus: uncharacterized protein (369 aa).

9 helical membrane passes run 25-45 (QWVILASFLVIVNLISLTVHW), 47-67 (FGLLLISCSAALLAYCQLMPE), 119-139 (LNIVHLFVISGFHLSFLFGVM), 152-172 (ITGFVMLLLYLFLVGFAFSAL), 206-226 (GALHNFGFNFSFLACFVLFAI), 235-255 (LQAVLTSTLILIVVSPITLHL), 268-288 (LLFTPIALFYFCASWLLLPLI), 295-315 (LVGFYWPLPWLSQWALNTTVF), and 323-343 (WVFYLVYYGLWGLLYTVGTVF).

The protein to B.subtilis ComEC.

It localises to the cell membrane. This is an uncharacterized protein from Mycoplasma pneumoniae (strain ATCC 29342 / M129 / Subtype 1) (Mycoplasmoides pneumoniae).